A 35-amino-acid polypeptide reads, in one-letter code: Jingzhaotoxin F6-27.63 (35 aa).

3 disulfides stabilise this stretch: C2–C17, C9–C22, and C16–C29.

It belongs to the neurotoxin 10 (Hwtx-1) family. 49 (Jztx-F6) subfamily. In terms of tissue distribution, expressed by the venom gland.

The protein resides in the secreted. Probable ion channel inhibitor. This chain is Jingzhaotoxin F6-27.63, found in Chilobrachys guangxiensis (Chinese earth tiger tarantula).